Here is a 189-residue protein sequence, read N- to C-terminus: uncharacterized protein (189 aa).

Basic and acidic residues predominate over residues 105-115; that stretch reads EKLEKEEESKT. The disordered stretch occupies residues 105–189; it reads EKLEKEEESK…TDDEKTEVST (85 aa). The span at 116–136 shows a compositional bias: basic residues; it reads AKKRAKRLRQKAAAKKRKLTK. Residues 141–151 show a composition bias toward acidic residues; the sequence is SDESSSDDSDS. Positions 161–177 are enriched in basic and acidic residues; the sequence is SEGKQNTEVEDKDKVEK. The segment covering 178–189 has biased composition (acidic residues); the sequence is EETDDEKTEVST.

This is an uncharacterized protein from Caenorhabditis elegans.